Here is a 652-residue protein sequence, read N- to C-terminus: Interferon-induced GTP-binding protein Mx1 (652 aa).

The segment at 1 to 27 (MKERTSACRHGTPQKHPDTSEESQAME) is disordered. One can recognise a Dynamin-type G domain in the interval 58–331 (DLALPAIAVI…LTSHICKSLP (274 aa)). The tract at residues 68 to 75 (GDQSSGKS) is G1 motif. 68–75 (GDQSSGKS) contacts GTP. The G2 motif stretch occupies residues 93–95 (VTR). Residues 169–172 (DLPG) are G3 motif. Residues 169–173 (DLPGI) and 238–241 (TKPD) contribute to the GTP site. Positions 238-241 (TKPD) are G4 motif. Positions 270 to 273 (KCRG) are G5 motif. Positions 332-357 (ILENQINVNHQIASEELQKYGADIPE) are bundle signaling element (BSE). Residues 357 to 526 (EDDSKRLSFL…HFQMEHIVYC (170 aa)) form a middle domain region. The segment at 358–622 (DDSKRLSFLM…TSKCNWFLTE (265 aa)) is stalk. Residues 564 to 652 (TTEMTQHLNA…AQRKLAKFSN (89 aa)) enclose the GED domain.

This sequence belongs to the TRAFAC class dynamin-like GTPase superfamily. Dynamin/Fzo/YdjA family. In terms of assembly, homooligomer. Oligomerizes into multimeric filamentous or ring-like structures by virtue of its stalk domain. Oligomerization is critical for GTPase activity, protein stability, and recognition of viral target structures. Interacts with TRPC1, TRPC3, TRPC4, TRPC5, TRPC6 and TRPC7. Interacts with HSPA5. Interacts with TUBB/TUBB5. Interacts with DDX39A and DDX39B. In terms of processing, ISGylated.

It is found in the nucleus. The protein resides in the cytoplasm. Its subcellular location is the endoplasmic reticulum membrane. The protein localises to the perinuclear region. In terms of biological role, interferon-induced dynamin-like GTPase which has antiviral activity against influenza A virus, (IAV) and Thogoto virus (THOV). Inhibits IAV by interfering with the process of primary transcription, probably by affecting the viral polymerase function. The chain is Interferon-induced GTP-binding protein Mx1 (Mx1) from Rattus norvegicus (Rat).